The sequence spans 627 residues: UvrABC system protein C (627 aa).

The region spanning 22 to 100 (NNPGVYRMFN…IKRLRPRFNV (79 aa)) is the GIY-YIG domain. A UVR domain is found at 210 to 245 (QSVKDHLAAAMQAASADLDFEHAAVYRDRLAALSHV).

It belongs to the UvrC family. Interacts with UvrB in an incision complex.

The protein resides in the cytoplasm. Functionally, the UvrABC repair system catalyzes the recognition and processing of DNA lesions. UvrC both incises the 5' and 3' sides of the lesion. The N-terminal half is responsible for the 3' incision and the C-terminal half is responsible for the 5' incision. This Brucella abortus biovar 1 (strain 9-941) protein is UvrABC system protein C.